A 366-amino-acid polypeptide reads, in one-letter code: Phospho-N-acetylmuramoyl-pentapeptide-transferase (366 aa).

10 helical membrane-spanning segments follow: residues 27–47 (AALFTSALIVFLFGPTIINSL), 71–91 (TPTMGGLMILAGIVGASLLWA), 93–113 (LSNVYVVATLLVTLGFGAIGF), 134–154 (LGIEFVIAGIAVYFMMRTALA), 174–194 (FMINIGIMFVVFGGFVIVGAG), 205–225 (GLAIVPVMIAAASFGVIAYLA), 245–265 (LAVVLGAVIGAGLGFLWFNAP), 268–288 (AIFMGDTGSLALGGTIGTVAV), 294–314 (IVMAIIGGLFVMETLSVIIQV), and 343–363 (QVVIRFWIIAVGLAMLGLSTL).

Belongs to the glycosyltransferase 4 family. MraY subfamily. Mg(2+) serves as cofactor.

It is found in the cell inner membrane. It carries out the reaction UDP-N-acetyl-alpha-D-muramoyl-L-alanyl-gamma-D-glutamyl-meso-2,6-diaminopimeloyl-D-alanyl-D-alanine + di-trans,octa-cis-undecaprenyl phosphate = di-trans,octa-cis-undecaprenyl diphospho-N-acetyl-alpha-D-muramoyl-L-alanyl-D-glutamyl-meso-2,6-diaminopimeloyl-D-alanyl-D-alanine + UMP. It functions in the pathway cell wall biogenesis; peptidoglycan biosynthesis. Catalyzes the initial step of the lipid cycle reactions in the biosynthesis of the cell wall peptidoglycan: transfers peptidoglycan precursor phospho-MurNAc-pentapeptide from UDP-MurNAc-pentapeptide onto the lipid carrier undecaprenyl phosphate, yielding undecaprenyl-pyrophosphoryl-MurNAc-pentapeptide, known as lipid I. The chain is Phospho-N-acetylmuramoyl-pentapeptide-transferase from Rhizobium leguminosarum bv. trifolii (strain WSM2304).